We begin with the raw amino-acid sequence, 428 residues long: C4-dicarboxylate transport protein 1 (428 aa).

The next 8 helical transmembrane spans lie at 5–27 (FYKI…GHFE), 42–64 (IQLI…IAGM), 77–99 (ALLY…GHIF), 150–167 (ILQI…LSAM), 188–210 (IVHV…TIGK), 225–247 (TFYL…LTGF), 314–336 (IFIS…LAVA), and 351–373 (FITL…VLIL).

Belongs to the dicarboxylate/amino acid:cation symporter (DAACS) (TC 2.A.23) family.

The protein resides in the cell inner membrane. Functionally, responsible for the transport of dicarboxylates such as succinate, fumarate, and malate from the periplasm across the membrane. The sequence is that of C4-dicarboxylate transport protein 1 (dctA1) from Ralstonia nicotianae (strain ATCC BAA-1114 / GMI1000) (Ralstonia solanacearum).